The sequence spans 302 residues: Oxygen-dependent coproporphyrinogen-III oxidase (302 aa).

A substrate-binding site is contributed by Ser-94. His-98 and His-108 together coordinate a divalent metal cation. The active-site Proton donor is the His-108. 110-112 (NVR) lines the substrate pocket. The a divalent metal cation site is built by His-147 and His-177. The interval 242–277 (YVEFNLVYDRGTLFGLQTGGRTESILMSMPPLVRWQ) is important for dimerization. 260–262 (GGR) provides a ligand contact to substrate.

This sequence belongs to the aerobic coproporphyrinogen-III oxidase family. Homodimer. It depends on a divalent metal cation as a cofactor.

It localises to the cytoplasm. It carries out the reaction coproporphyrinogen III + O2 + 2 H(+) = protoporphyrinogen IX + 2 CO2 + 2 H2O. Its pathway is porphyrin-containing compound metabolism; protoporphyrin-IX biosynthesis; protoporphyrinogen-IX from coproporphyrinogen-III (O2 route): step 1/1. Its function is as follows. Involved in the heme biosynthesis. Catalyzes the aerobic oxidative decarboxylation of propionate groups of rings A and B of coproporphyrinogen-III to yield the vinyl groups in protoporphyrinogen-IX. This is Oxygen-dependent coproporphyrinogen-III oxidase from Shewanella sp. (strain MR-4).